A 724-amino-acid chain; its full sequence is MTDYYEPTFLFRQNAIKRFSPSLSPISSVESLSLVDSNSISNNGTTTTTTTTTSSIYQNASNSSWLLNPYNVKDTAILNQSCCLNRTNVKSNYWKIPDESMNLTSMSINKNQGGNPILAISSGKSESNLFIYELNLFNNHLIHHHTISLPNIHAMKWINNTRYLVTGNNKGYAHLVSTPKLATHDVFNTNSNGDFDYNDDDEDDNNSAEICKRFNHRKHLKQNQLENTISTPIKHLNFLNNHENLLSIYNDYLFYWDIKGCHQQTRPSPISISTVSGIKNFDVPEKNHSSTNTSSANTVAICGLFGVSLFDLRDCQFNIPNYNTAQIHDKTQSSYRKLSANIVKWNPMNTNILAAGHGDGVIRLWDIRKQDSYIAELYGHNNYSITTSMEWNNNDLFTGSKDGNIIHWDLSNISKDSQWEENDNTKLPISCGLKEGFNSIEFNGKANKLETKLDQYQCGTILPASNSSIVAMCSTTTTTSSNDHDDEEIKILSIDSSSFLGVHNKVSESINVNINTNKLYYTEEDIQLLLQSQLNNNNITSSSATGSNDTLISFGNNVSQDSLVKPLTISRKPTTTIKNNNNNTTTRPTNTHTHSASIDESIVSVHNVSNDTLVNSPTRFNICESEDEFTFNYVKNNTNNEDQRQSDNRNSSFSSVSSQQTQLNNSVESLSTVVTDVENEVNHQEHKYMSLLLPVKDTSTTTTTTKDNNTNSDQAVTNTPIISI.

WD repeat units lie at residues 98-142 (DESM…NHLI), 147-186 (ISLPNIHAMKWINNTRYLVTGNNKGYAHLVSTPKLATHDV), 228-266 (TISTPIKHLNFLNNHENLLSIYNDYLFYWDIKGCHQQTR), 334-375 (SYRK…SYIA), and 379-418 (GHNNYSITTSMEWNNNDLFTGSKDGNIIHWDLSNISKDSQ). Disordered regions lie at residues 569–596 (ISRKPTTTIKNNNNNTTTRPTNTHTHSA), 638–667 (TNNEDQRQSDNRNSSFSSVSSQQTQLNNSV), and 699–724 (STTTTTTKDNNTNSDQAVTNTPIISI). Composition is skewed to low complexity over residues 571–594 (RKPTTTIKNNNNNTTTRPTNTHTH), 648–662 (NRNSSFSSVSSQQTQ), and 699–713 (STTTTTTKDNNTNSD). Positions 714-724 (QAVTNTPIISI) are enriched in polar residues.

It belongs to the WD repeat DSE1 family.

Functionally, involved in cell wall metabolism and required for the separation of the mother and daughter cells. This Candida albicans (strain SC5314 / ATCC MYA-2876) (Yeast) protein is Protein DSE1 (DSE1).